Consider the following 861-residue polypeptide: Probable beta-glucosidase A (861 aa).

The N-terminal stretch at 1–19 (MKLSILEAAALTAASVVSA) is a signal peptide. Residues asparagine 62, asparagine 212, and asparagine 253 are each glycosylated (N-linked (GlcNAc...) asparagine). Residue aspartate 281 is part of the active site. N-linked (GlcNAc...) asparagine glycans are attached at residues asparagine 316, asparagine 323, asparagine 355, asparagine 524, asparagine 543, asparagine 565, asparagine 669, and asparagine 713. The disordered stretch occupies residues 735-754 (PEGATDGSPQPRLPASGGPG).

The protein belongs to the glycosyl hydrolase 3 family.

The protein resides in the secreted. The catalysed reaction is Hydrolysis of terminal, non-reducing beta-D-glucosyl residues with release of beta-D-glucose.. Its pathway is glycan metabolism; cellulose degradation. Functionally, beta-glucosidases are one of a number of cellulolytic enzymes involved in the degradation of cellulosic biomass. Catalyzes the last step releasing glucose from the inhibitory cellobiose. In Aspergillus terreus (strain NIH 2624 / FGSC A1156), this protein is Probable beta-glucosidase A (bglA).